The chain runs to 320 residues: Glyoxylate/hydroxypyruvate reductase B (320 aa).

Residues arginine 233 and glutamate 262 contribute to the active site. Residue histidine 281 is the Proton donor of the active site.

It belongs to the D-isomer specific 2-hydroxyacid dehydrogenase family. GhrB subfamily. Homodimer.

The protein localises to the cytoplasm. It catalyses the reaction glycolate + NADP(+) = glyoxylate + NADPH + H(+). The enzyme catalyses (R)-glycerate + NAD(+) = 3-hydroxypyruvate + NADH + H(+). The catalysed reaction is (R)-glycerate + NADP(+) = 3-hydroxypyruvate + NADPH + H(+). Its function is as follows. Catalyzes the NADPH-dependent reduction of glyoxylate and hydroxypyruvate into glycolate and glycerate, respectively. In Pectobacterium atrosepticum (strain SCRI 1043 / ATCC BAA-672) (Erwinia carotovora subsp. atroseptica), this protein is Glyoxylate/hydroxypyruvate reductase B.